A 494-amino-acid chain; its full sequence is Alpha-amylase-related protein (494 aa).

The signal sequence occupies residues 1–20 (MIKFALALTLCLAGASLSLA). Residue Q21 is modified to Pyrrolidone carboxylic acid. Residues C48 and C104 are joined by a disulfide bond. 3 residues coordinate Ca(2+): N118, Q169, and D178. The cysteines at positions 157 and 171 are disulfide-linked. R206 is a binding site for chloride. The active-site Nucleophile is the D208. Ca(2+) is bound at residue H212. The active-site Proton donor is E245. 2 residues coordinate chloride: N308 and R343. 3 disulfide bridges follow: C376/C382, C418/C441, and C448/C460.

This sequence belongs to the glycosyl hydrolase 13 family. As to quaternary structure, monomer. Requires Ca(2+) as cofactor. Chloride serves as cofactor.

The protein localises to the secreted. The catalysed reaction is Endohydrolysis of (1-&gt;4)-alpha-D-glucosidic linkages in polysaccharides containing three or more (1-&gt;4)-alpha-linked D-glucose units.. The polypeptide is Alpha-amylase-related protein (Amyrel) (Drosophila kikkawai (Fruit fly)).